The primary structure comprises 192 residues: Thiamine transporter ThiT (192 aa).

6 consecutive transmembrane segments (helical) span residues 10-30 (LIEI…SGMF), 31-51 (LSMP…LISF), 57-77 (AGLT…NLFA), 81-101 (VQLL…GCFA), 123-143 (AVFI…AVFF), and 164-184 (YMVP…MTAP).

It belongs to the vitamin uptake transporter (VUT/ECF) (TC 2.A.88) family. Thiamine transporter subfamily. In terms of assembly, forms a stable energy-coupling factor (ECF) transporter complex composed of a membrane-embedded substrate-binding protein (S component), two ATP-binding proteins (A components) and a transmembrane protein (T component).

The protein localises to the cell membrane. Functionally, probably a thiamine-binding protein that interacts with the energy-coupling factor (ECF) ABC-transporter complex. Unlike classic ABC transporters this ECF transporter provides the energy necessary to transport a number of different substrates. The substrates themselves are bound by transmembrane, not extracytoplasmic soluble proteins. This Bacillus subtilis (strain 168) protein is Thiamine transporter ThiT (thiT).